Reading from the N-terminus, the 37-residue chain is Islet amyloid polypeptide (37 aa).

A disulfide bond links C2 and C7. Y37 bears the Tyrosine amide mark.

It belongs to the calcitonin family. In terms of assembly, can form homodimers. Interacts with IDE and INS. Interaction with INS inhibits homodimerization and fibril formation.

It is found in the secreted. In terms of biological role, amylin/IAPP is a glucoregulatory peptide hormone that plays an important role in the regulation of energy homeostasis. Selectively inhibits insulin-stimulated glucose utilization and glycogen deposition in muscle, while not affecting adipocyte glucose metabolism. IAPP function is mediated by the CALCR-RAMPs (AMYRs) receptor complexes. Amylin can also bind CALCR receptor in the absence of RAMPs, although it is more selective for AMYRs. This chain is Islet amyloid polypeptide (IAPP), found in Cricetulus griseus (Chinese hamster).